A 324-amino-acid chain; its full sequence is NADH-quinone oxidoreductase subunit H 2 (324 aa).

A run of 9 helical transmembrane segments spans residues 1–21 (MIGM…LLVV), 77–97 (ILAP…VAFG), 109–129 (VMFL…GALA), 147–167 (LGYE…AGSL), 179–199 (VWFV…GVAA), 214–234 (LVAG…FLGE), 238–258 (VLLV…GPVW), 263–283 (LPGP…FIWI), and 298–318 (FAWK…GLIV).

This sequence belongs to the complex I subunit 1 family. In terms of assembly, NDH-1 is composed of 14 different subunits. Subunits NuoA, H, J, K, L, M, N constitute the membrane sector of the complex.

The protein localises to the cell inner membrane. It carries out the reaction a quinone + NADH + 5 H(+)(in) = a quinol + NAD(+) + 4 H(+)(out). Functionally, NDH-1 shuttles electrons from NADH, via FMN and iron-sulfur (Fe-S) centers, to quinones in the respiratory chain. The immediate electron acceptor for the enzyme in this species is believed to be ubiquinone. Couples the redox reaction to proton translocation (for every two electrons transferred, four hydrogen ions are translocated across the cytoplasmic membrane), and thus conserves the redox energy in a proton gradient. This subunit may bind ubiquinone. This chain is NADH-quinone oxidoreductase subunit H 2, found in Rhodopseudomonas palustris (strain BisB18).